Reading from the N-terminus, the 307-residue chain is MKLIIATRKSQLALWQSEHVAQILKNTHQIEVLLEGFKTKGDVLLDSPLAKIGGKGLFTKELEESMLRKEAHLAVHSLKDVPSFFPQGLVLAAVSKREQSNDAMLSQNYKDFLSLPKGAKIGTTSLRRKMQLLLLRPDLDIISLRGNVNSRIEKLKNNDFDAIILAMAGIKRLNLDKQVNFVYEFSKDELIPAASQGALGIESINDEKILELLKCLNDENALIETSIEREFIATLEGGCQVPIGINAELLGDEICVRAVLGLPDGSEILKDKRMIKKNDFKGFGESLAKEFIAKGAKELLKKAESMI.

Cys239 carries the post-translational modification S-(dipyrrolylmethanemethyl)cysteine.

The protein belongs to the HMBS family. As to quaternary structure, monomer. It depends on dipyrromethane as a cofactor.

The catalysed reaction is 4 porphobilinogen + H2O = hydroxymethylbilane + 4 NH4(+). It functions in the pathway porphyrin-containing compound metabolism; protoporphyrin-IX biosynthesis; coproporphyrinogen-III from 5-aminolevulinate: step 2/4. Its function is as follows. Tetrapolymerization of the monopyrrole PBG into the hydroxymethylbilane pre-uroporphyrinogen in several discrete steps. This Campylobacter jejuni subsp. jejuni serotype O:23/36 (strain 81-176) protein is Porphobilinogen deaminase.